The chain runs to 887 residues: Dystrophin-like protein 1 (887 aa).

The PID domain occupies 30–197 (YQHGIHFEAK…KISMQSEDEA (168 aa)). 2 stretches are compositionally biased toward basic and acidic residues: residues 176 to 186 (MQEKHEDEAAK) and 205 to 216 (IEERGGREEDSR). Disordered stretches follow at residues 176 to 254 (MQEK…GTAI), 506 to 606 (EIHH…QYER), 641 to 753 (QFDM…KNTA), 804 to 839 (IAEE…PPNT), and 853 to 887 (NVDR…GYPQ). Residues 242–254 (KPSTTSSSGGTAI) show a composition bias toward polar residues. The stretch at 434 to 506 (QLMRSQLDQA…QMLETKITSE (73 aa)) forms a coiled coil. Positions 510–519 (SSSQPPQHQP) are enriched in low complexity. Residues 573 to 588 (KESKERRKDEGTRTEP) show a composition bias toward basic and acidic residues. Over residues 597 to 606 (DYSSSDQYER) the composition is skewed to polar residues. 2 stretches are compositionally biased toward polar residues: residues 816–827 (NRNNLPSSTNSS) and 863–887 (SLLT…GYPQ).

Component of the dystrophin glycoprotein complex (DGC). Interacts with zyx-1. As to expression, expressed in muscles of the head, body wall and vulva. In some animals, weaker expression is observed in the intestinal muscles (at protein level). Isoform a is expressed in lateral neurons SDQL and SDQR.

Together with dys-1 and hlh-1, participates in a common muscular function. In Caenorhabditis elegans, this protein is Dystrophin-like protein 1.